Reading from the N-terminus, the 641-residue chain is WW domain-binding protein 11 (641 aa).

Over residues 1 to 11 the composition is skewed to polar residues; the sequence is MGRRSTSSTKS. Residues 1–37 are disordered; it reads MGRRSTSSTKSGKFMNPTDQARKEARKRELKKNKKQR. The interval 1-45 is required for nuclear import; the sequence is MGRRSTSSTKSGKFMNPTDQARKEARKRELKKNKKQRMMVRAAVL. Residue lysine 13 is modified to N6-acetyllysine. Residues 28–37 are compositionally biased toward basic residues; the sequence is RELKKNKKQR. A coiled-coil region spans residues 75-133; it reads EKVLKDKRKKLRETFERILRLYEKENPDIYKELRKLEVEYEQKRAQLSQYFDAVKNAQH. Serine 181 bears the Phosphoserine mark. A disordered region spans residues 186-213; it reads LGHGVPRLPPGRKPPGPPPGPPPPQVVQ. Arginine 192 is modified (omega-N-methylarginine). A compositionally biased stretch (pro residues) spans 192–210; it reads RLPPGRKPPGPPPGPPPPQ. An interaction with PP1 region spans residues 217–221; the sequence is RKVGF. Tyrosine 236 carries the post-translational modification Phosphotyrosine. The segment at 236–552 is disordered; sequence YSPELAQRGH…RPKADDTSAA (317 aa). Phosphoserine is present on serine 237. Acidic residues predominate over residues 253-263; the sequence is SEDDGYPEDMD. The segment covering 276–304 has biased composition (basic and acidic residues); the sequence is TDKSDGESDGDEFVHRDNGERDNNEEKKS. Residues serine 279 and serine 283 each carry the phosphoserine modification. Residues 306-310 form an interaction with PP1 region; the sequence is LSVRF. Positions 351 to 365 are enriched in acidic residues; the sequence is EFSEDDDEDDSDDSE. Residues serine 353, serine 361, and serine 364 each carry the phosphoserine modification. Residues 366 to 380 are compositionally biased toward basic and acidic residues; sequence AEKQSQKQHKEESHS. Positions 386–404 are enriched in low complexity; sequence ASSQQQAPPQSVPPSQIQA. Composition is skewed to pro residues over residues 405-447, 456-504, and 510-530; these read PPMP…PPGM, RLLP…PPRP, and PLVPPLGPAPPGLFPPAPLPN. The PGR signature appears at 455–466; it reads PRLLPPGPPPGR. Residue lysine 557 forms a Glycyl lysine isopeptide (Lys-Gly) (interchain with G-Cter in SUMO2) linkage. N6-acetyllysine is present on lysine 565. Residue lysine 572 forms a Glycyl lysine isopeptide (Lys-Gly) (interchain with G-Cter in SUMO2) linkage. Residues 587-623 are disordered; that stretch reads RENKGATAAPQRKSEDDSAVPLAKAAPKSGPSVPVSV. Position 600 is a phosphoserine (serine 600).

Interacts with PPP1CA, PPP1CB and PPP1CC. Interacts via the PGR motif with PQBP1 in the nucleus. Interacts with the WW domains of WBP4. Ubiquitous. Highly expressed in the heart, pancreas, kidney skeletal muscle, placenta and brain (at protein level). Weakly expressed in liver and lung.

The protein localises to the nucleus. Its subcellular location is the cytoplasm. Functionally, activates pre-mRNA splicing. May inhibit PP1 phosphatase activity. This chain is WW domain-binding protein 11, found in Homo sapiens (Human).